A 380-amino-acid chain; its full sequence is Cytochrome b (380 aa).

4 consecutive transmembrane segments (helical) span residues 33–53 (FGSL…FLAM), 77–98 (WLIR…YLHI), 113–133 (WNIG…GYVL), and 178–198 (FFAF…LHLL). Heme b-binding residues include His83 and His97. Heme b is bound by residues His182 and His196. His201 contributes to the a ubiquinone binding site. Helical transmembrane passes span 226-246 (YKDL…ALFT), 288-308 (LGGV…PILH), 320-340 (VTQF…WIGG), and 347-367 (YIII…LIMP).

It belongs to the cytochrome b family. As to quaternary structure, the cytochrome bc1 complex contains 3 respiratory subunits (MT-CYB, CYC1 and UQCRFS1), 2 core proteins (UQCRC1 and UQCRC2) and probably 6 low-molecular weight proteins. Heme b serves as cofactor.

It is found in the mitochondrion inner membrane. In terms of biological role, component of the ubiquinol-cytochrome c reductase complex (complex III or cytochrome b-c1 complex) that is part of the mitochondrial respiratory chain. The b-c1 complex mediates electron transfer from ubiquinol to cytochrome c. Contributes to the generation of a proton gradient across the mitochondrial membrane that is then used for ATP synthesis. The protein is Cytochrome b (mt-cyb) of Pagrus major (Red sea bream).